The following is a 262-amino-acid chain: Flap endonuclease Xni (262 aa).

A Mg(2+)-binding site is contributed by Asp105. The 5'-3' exonuclease domain maps to Glu162–Leu254. Residues Leu172, Ala173, Pro181, Ile183, and Ile186 each contribute to the K(+) site. Residues Gly185–Ser190 are interaction with DNA.

This sequence belongs to the Xni family. The cofactor is Mg(2+). Requires K(+) as cofactor.

In terms of biological role, has flap endonuclease activity. During DNA replication, flap endonucleases cleave the 5'-overhanging flap structure that is generated by displacement synthesis when DNA polymerase encounters the 5'-end of a downstream Okazaki fragment. This chain is Flap endonuclease Xni, found in Shewanella baltica (strain OS195).